We begin with the raw amino-acid sequence, 250 residues long: MRPGAASIRTTGSVLAFLVPSAQCMRSAPAARFSTSPIRCKKDNNSNRGVSAVRGTGLRKRQTLSVLSKKGSGDQPPKPVPITEKVTGTPDHGLWDFFKDKKLIQTPVDESRHGRAWTVGELRNQDWDALHQLWWVCVKERNRLATEKIERARLDAGYGDQENKDRDTVVQETMKAILDTLSERHQAYMEAVELAKQDPSIDLSRTDGPQFVEPAYEGVTCRVAEYTLESFGHVGVGQHLLSEGWHIVTA.

A mitochondrion-targeting transit peptide spans 1–24; the sequence is MRPGAASIRTTGSVLAFLVPSAQC. The segment at 66–86 is disordered; the sequence is VLSKKGSGDQPPKPVPITEKV.

It belongs to the universal ribosomal protein uL29 family. As to quaternary structure, component of the mitochondrial large ribosomal subunit. Mature mitochondrial ribosomes consist of a small (37S) and a large (54S) subunit. The 37S subunit contains at least 33 different proteins and 1 molecule of RNA (15S). The 54S subunit contains at least 45 different proteins and 1 molecule of RNA (21S).

It is found in the mitochondrion. The chain is Large ribosomal subunit protein uL29m (MRPL4) from Phaeosphaeria nodorum (strain SN15 / ATCC MYA-4574 / FGSC 10173) (Glume blotch fungus).